The chain runs to 342 residues: S-adenosylmethionine:tRNA ribosyltransferase-isomerase (342 aa).

Belongs to the QueA family. As to quaternary structure, monomer.

The protein resides in the cytoplasm. The catalysed reaction is 7-aminomethyl-7-carbaguanosine(34) in tRNA + S-adenosyl-L-methionine = epoxyqueuosine(34) in tRNA + adenine + L-methionine + 2 H(+). It functions in the pathway tRNA modification; tRNA-queuosine biosynthesis. Transfers and isomerizes the ribose moiety from AdoMet to the 7-aminomethyl group of 7-deazaguanine (preQ1-tRNA) to give epoxyqueuosine (oQ-tRNA). The sequence is that of S-adenosylmethionine:tRNA ribosyltransferase-isomerase from Campylobacter jejuni subsp. jejuni serotype O:2 (strain ATCC 700819 / NCTC 11168).